The sequence spans 191 residues: ATP-dependent Clp protease proteolytic subunit 1 (191 aa).

S91 functions as the Nucleophile in the catalytic mechanism. The active site involves H116.

This sequence belongs to the peptidase S14 family. In terms of assembly, fourteen ClpP subunits assemble into 2 heptameric rings which stack back to back to give a disk-like structure with a central cavity, resembling the structure of eukaryotic proteasomes.

It localises to the cytoplasm. The catalysed reaction is Hydrolysis of proteins to small peptides in the presence of ATP and magnesium. alpha-casein is the usual test substrate. In the absence of ATP, only oligopeptides shorter than five residues are hydrolyzed (such as succinyl-Leu-Tyr-|-NHMec, and Leu-Tyr-Leu-|-Tyr-Trp, in which cleavage of the -Tyr-|-Leu- and -Tyr-|-Trp bonds also occurs).. Functionally, cleaves peptides in various proteins in a process that requires ATP hydrolysis. Has a chymotrypsin-like activity. Plays a major role in the degradation of misfolded proteins. The sequence is that of ATP-dependent Clp protease proteolytic subunit 1 from Chlamydia caviae (strain ATCC VR-813 / DSM 19441 / 03DC25 / GPIC) (Chlamydophila caviae).